A 566-amino-acid polypeptide reads, in one-letter code: 2-isopropylmalate synthase (566 aa).

A Pyruvate carboxyltransferase domain is found at 32–306; the sequence is PLWCAVDLRD…DPQIDFSNID (275 aa). The Mg(2+) site is built by aspartate 41, histidine 245, histidine 247, and asparagine 281. The segment at 451–566 is regulatory domain; sequence PVRPLERIKQ…VVSAINRASR (116 aa).

The protein belongs to the alpha-IPM synthase/homocitrate synthase family. LeuA type 2 subfamily. Homodimer. Mg(2+) serves as cofactor.

The protein localises to the cytoplasm. It catalyses the reaction 3-methyl-2-oxobutanoate + acetyl-CoA + H2O = (2S)-2-isopropylmalate + CoA + H(+). It participates in amino-acid biosynthesis; L-leucine biosynthesis; L-leucine from 3-methyl-2-oxobutanoate: step 1/4. Functionally, catalyzes the condensation of the acetyl group of acetyl-CoA with 3-methyl-2-oxobutanoate (2-ketoisovalerate) to form 3-carboxy-3-hydroxy-4-methylpentanoate (2-isopropylmalate). The chain is 2-isopropylmalate synthase from Mycobacterium ulcerans (strain Agy99).